We begin with the raw amino-acid sequence, 156 residues long: ATP synthase subunit b (156 aa).

A helical membrane pass occupies residues 7 to 27; sequence LFAQMVVFLILAWFTMKFVWP.

The protein belongs to the ATPase B chain family. In terms of assembly, F-type ATPases have 2 components, F(1) - the catalytic core - and F(0) - the membrane proton channel. F(1) has five subunits: alpha(3), beta(3), gamma(1), delta(1), epsilon(1). F(0) has three main subunits: a(1), b(2) and c(10-14). The alpha and beta chains form an alternating ring which encloses part of the gamma chain. F(1) is attached to F(0) by a central stalk formed by the gamma and epsilon chains, while a peripheral stalk is formed by the delta and b chains.

It is found in the cell inner membrane. F(1)F(0) ATP synthase produces ATP from ADP in the presence of a proton or sodium gradient. F-type ATPases consist of two structural domains, F(1) containing the extramembraneous catalytic core and F(0) containing the membrane proton channel, linked together by a central stalk and a peripheral stalk. During catalysis, ATP synthesis in the catalytic domain of F(1) is coupled via a rotary mechanism of the central stalk subunits to proton translocation. In terms of biological role, component of the F(0) channel, it forms part of the peripheral stalk, linking F(1) to F(0). The protein is ATP synthase subunit b of Paraburkholderia xenovorans (strain LB400).